Consider the following 450-residue polypeptide: NADH-ubiquinone oxidoreductase chain 2 (450 aa).

The next 13 membrane-spanning stretches (helical) occupy residues 25 to 45 (GTIT…IVAM), 58 to 78 (LTPY…MLLM), 90 to 110 (SPFY…FPLV), 113 to 133 (LIAL…LTGL), 145 to 165 (LLYF…SYFV), 186 to 206 (AFDY…MAPL), 219 to 239 (TYIT…WIFA), 248 to 268 (VTIL…LFQV), 272 to 292 (TMLA…MMSY), 295 to 315 (AFYI…LGML), 344 to 364 (LAFS…TPGF), 385 to 405 (AIVV…KVLF), and 414 to 436 (NFIN…SFFM).

The protein belongs to the complex I subunit 2 family.

The protein localises to the mitochondrion inner membrane. It catalyses the reaction a ubiquinone + NADH + 5 H(+)(in) = a ubiquinol + NAD(+) + 4 H(+)(out). In terms of biological role, core subunit of the mitochondrial membrane respiratory chain NADH dehydrogenase (Complex I) that is believed to belong to the minimal assembly required for catalysis. Complex I functions in the transfer of electrons from NADH to the respiratory chain. The immediate electron acceptor for the enzyme is believed to be ubiquinone. The sequence is that of NADH-ubiquinone oxidoreductase chain 2 (ND2) from Debaryomyces hansenii (strain ATCC 36239 / CBS 767 / BCRC 21394 / JCM 1990 / NBRC 0083 / IGC 2968) (Yeast).